The chain runs to 100 residues: Ubiquitin-related modifier 1 homolog (100 aa).

At Gly100 the chain carries 1-thioglycine. Gly100 is covalently cross-linked (Glycyl lysine isopeptide (Gly-Lys) (interchain with K-? in acceptor proteins)).

This sequence belongs to the URM1 family. C-terminal thiocarboxylation occurs in 2 steps, it is first acyl-adenylated (-COAMP) via the hesA/moeB/thiF part of the MOCS3 homolog, then thiocarboxylated (-COSH) via the rhodanese domain of the MOCS3 homolog.

It is found in the cytoplasm. The protein operates within tRNA modification; 5-methoxycarbonylmethyl-2-thiouridine-tRNA biosynthesis. Functionally, acts as a sulfur carrier required for 2-thiolation of mcm(5)S(2)U at tRNA wobble positions of cytosolic tRNA(Lys), tRNA(Glu) and tRNA(Gln). Serves as sulfur donor in tRNA 2-thiolation reaction by being thiocarboxylated (-COSH) at its C-terminus by MOCS3. The sulfur is then transferred to tRNA to form 2-thiolation of mcm(5)S(2)U. Also acts as a ubiquitin-like protein (UBL) that is covalently conjugated via an isopeptide bond to lysine residues of target proteins. The thiocarboxylated form serves as substrate for conjugation and oxidative stress specifically induces the formation of UBL-protein conjugates. This is Ubiquitin-related modifier 1 homolog from Caenorhabditis elegans.